A 1147-amino-acid polypeptide reads, in one-letter code: Myosin heavy chain IB (1147 aa).

The Myosin motor domain maps to 9-677 (RGVDDLVLMP…TLFHLEECLD (669 aa)). 103 to 110 (GESGAGKT) contributes to the ATP binding site. Ser-315 carries the phosphoserine modification. The tract at residues 551–573 (CDALMEALSRCSPHYIRCIKPND) is actin-binding. Residues 715–900 (KERQRHSVNR…RANIQIGIAT (186 aa)) enclose the TH1 domain. Disordered regions lie at residues 901–954 (GLPK…YSQP) and 969–1089 (AAVP…APAA). 2 stretches are compositionally biased toward gly residues: residues 916–951 (SGGGGGYGGGRGGGGGGRGAAGGGRGGFGGGGGGGY) and 975–1079 (GRGG…GAGR). In terms of domain architecture, SH3 spans 1090 to 1147 (PAKPQVKALYDYDAQTGDELTFKEGDTIIVHQKDPAGWWEGELNGKRGWVPANYVQDI).

It belongs to the TRAFAC class myosin-kinesin ATPase superfamily. Myosin family. In terms of assembly, myosin I heavy chain is single-headed. Dimer of a heavy and a light chain. Inability to self-assemble into filaments.

Functionally, myosin is a protein that binds to F-actin and has ATPase activity that is activated by F-actin. The polypeptide is Myosin heavy chain IB (MIB) (Acanthamoeba castellanii (Amoeba)).